The sequence spans 614 residues: ATP-dependent RNA helicase dbp-3 (614 aa).

The interval 1–138 (MSSTKKHSRS…GTTTPAASTN (138 aa)) is disordered. Positions 9–36 (RSEGEEKDARLAKKVKTDETPVDGEVKK) are enriched in basic and acidic residues. Basic residues-rich tracts occupy residues 37–58 (ERKKDKKEKKDKKEKKDKKSKK) and 91–109 (KKEKKDKKEKKDKKEKKAK). Residues 117 to 138 (EESTSASKATTNGTTTPAASTN) show a composition bias toward low complexity. Positions 180–207 (MNFSQLPQSNLISKNPFAAYTNPTPIQS) match the Q motif motif. One can recognise a Helicase ATP-binding domain in the interval 210-394 (WPFSLSGRDV…ESYMINPAQV (185 aa)). 223–230 (AETGSGKT) is an ATP binding site. Positions 340–343 (DEAD) match the DEAD box motif. The region spanning 435–584 (RLYELLKEAQ…PVPEELLKFG (150 aa)) is the Helicase C-terminal domain.

It belongs to the DEAD box helicase family. DDX5/DBP2 subfamily.

The protein resides in the nucleus. It localises to the nucleolus. It carries out the reaction ATP + H2O = ADP + phosphate + H(+). Its function is as follows. ATP-dependent RNA helicase required for 60S ribosomal subunit synthesis. Involved in efficient pre-rRNA processing, predominantly at site A3, which is necessary for the normal formation of 25S and 5.8S rRNAs. This Neurospora crassa (strain ATCC 24698 / 74-OR23-1A / CBS 708.71 / DSM 1257 / FGSC 987) protein is ATP-dependent RNA helicase dbp-3 (dbp-3).